Consider the following 714-residue polypeptide: Polyribonucleotide nucleotidyltransferase (714 aa).

Mg(2+) contacts are provided by Asp484 and Asp490. The KH domain maps to 551–610 (PRIMVINIAPEKVREVIGPGGKVINKIIDETGVKIDTEDDGKITVAGENTESAQRAIDMI). The 69-residue stretch at 620–688 (GEKYLGRVTK…DQGKMTLSRK (69 aa)) folds into the S1 motif domain. Residues 685–714 (LSRKALLPKPERKEKKNFDKKSEDQNSEDK) are disordered. Positions 693-714 (KPERKEKKNFDKKSEDQNSEDK) are enriched in basic and acidic residues.

It belongs to the polyribonucleotide nucleotidyltransferase family. It depends on Mg(2+) as a cofactor.

The protein resides in the cytoplasm. The enzyme catalyses RNA(n+1) + phosphate = RNA(n) + a ribonucleoside 5'-diphosphate. Functionally, involved in mRNA degradation. Catalyzes the phosphorolysis of single-stranded polyribonucleotides processively in the 3'- to 5'-direction. The chain is Polyribonucleotide nucleotidyltransferase from Finegoldia magna (strain ATCC 29328 / DSM 20472 / WAL 2508) (Peptostreptococcus magnus).